A 248-amino-acid chain; its full sequence is Probable transcriptional regulatory protein BH14810 (248 aa).

Belongs to the TACO1 family.

It localises to the cytoplasm. The protein is Probable transcriptional regulatory protein BH14810 of Bartonella henselae (strain ATCC 49882 / DSM 28221 / CCUG 30454 / Houston 1) (Rochalimaea henselae).